Here is a 279-residue protein sequence, read N- to C-terminus: NADPH-dependent 7-cyano-7-deazaguanine reductase (279 aa).

86-88 serves as a coordination point for substrate; that stretch reads IES. 88–89 provides a ligand contact to NADPH; sequence SK. The active-site Thioimide intermediate is Cys-187. The active-site Proton donor is Asp-194. Position 226–227 (226–227) interacts with substrate; it reads HE. 255–256 serves as a coordination point for NADPH; the sequence is RG.

The protein belongs to the GTP cyclohydrolase I family. QueF type 2 subfamily. In terms of assembly, homodimer.

The protein resides in the cytoplasm. It catalyses the reaction 7-aminomethyl-7-carbaguanine + 2 NADP(+) = 7-cyano-7-deazaguanine + 2 NADPH + 3 H(+). The protein operates within tRNA modification; tRNA-queuosine biosynthesis. Catalyzes the NADPH-dependent reduction of 7-cyano-7-deazaguanine (preQ0) to 7-aminomethyl-7-deazaguanine (preQ1). The chain is NADPH-dependent 7-cyano-7-deazaguanine reductase from Glaesserella parasuis serovar 5 (strain SH0165) (Haemophilus parasuis).